The primary structure comprises 262 residues: 5'-nucleotidase SurE (262 aa).

The a divalent metal cation site is built by Asp-8, Asp-9, Ser-39, and Asn-95.

It belongs to the SurE nucleotidase family. A divalent metal cation serves as cofactor.

It is found in the cytoplasm. The enzyme catalyses a ribonucleoside 5'-phosphate + H2O = a ribonucleoside + phosphate. Functionally, nucleotidase that shows phosphatase activity on nucleoside 5'-monophosphates. This Methanothermobacter thermautotrophicus (strain ATCC 29096 / DSM 1053 / JCM 10044 / NBRC 100330 / Delta H) (Methanobacterium thermoautotrophicum) protein is 5'-nucleotidase SurE.